We begin with the raw amino-acid sequence, 633 residues long: DNA mismatch repair protein MutL (633 aa).

It belongs to the DNA mismatch repair MutL/HexB family.

Functionally, this protein is involved in the repair of mismatches in DNA. It is required for dam-dependent methyl-directed DNA mismatch repair. May act as a 'molecular matchmaker', a protein that promotes the formation of a stable complex between two or more DNA-binding proteins in an ATP-dependent manner without itself being part of a final effector complex. In Pseudomonas putida (strain W619), this protein is DNA mismatch repair protein MutL.